A 1104-amino-acid polypeptide reads, in one-letter code: Partner and localizer of BRCA2 (1104 aa).

A required for its oligomerization and is important for its focal concentration at DNA damage sites region spans residues 1-157; the sequence is MEELSGKPLS…WEKSSVSQEK (157 aa). Positions 1–195 are interaction with RAD51; that stretch reads MEELSGKPLS…TPVSEKTHLL (195 aa). The interaction with BRCA1 stretch occupies residues 1–308; sequence MEELSGKPLS…RAHGQLPGSP (308 aa). Residues 9–48 are a coiled coil; it reads LSYAEKEKLKEKLAFLKKEYSRTLARLQRAKRAEKAKNSK. Residues 39–52 show a composition bias toward basic and acidic residues; the sequence is KRAEKAKNSKKAIE. 3 disordered regions span residues 39-91, 122-157, and 243-272; these read KRAE…TGEN, GQLLHSTSSPDGKKEQNTLPGTTKTPWEKSSVSQEK, and PSCTASNSNHSQHLEHTPPKSGCKITTQGP. 2 stretches are compositionally biased toward polar residues: residues 59 to 70 and 138 to 154; these read EASSQLSHSESI and NTLPGTTKTPWEKSSVS. At serine 274 the chain carries Phosphoserine. Residues 304-354 are disordered; it reads LPGSPNSCSVNDLTHSNLPANSTPNSKSLKSPSNTVDERNEPLQEDEILGP. The span at 306–338 shows a compositional bias: polar residues; that stretch reads GSPNSCSVNDLTHSNLPANSTPNSKSLKSPSNT. Serine 364 bears the Phosphoserine mark. Positions 374 to 424 are chAM (Chromatin-association motif); required for chromatin association, mediates nucleosome association; sequence SCTMLEGLLFPAEYYVRTTRRMSDCQRKIALEAVIQSHLGVKKKELKKKTK. 2 disordered regions span residues 417–494 and 581–730; these read KELK…SART and LQRD…TPLP. Serine 432 bears the Phosphoserine mark. The segment covering 446–462 has biased composition (low complexity); that stretch reads TSTGQSSSGSLSQKLLS. A compositionally biased stretch (basic residues) spans 483-492; the sequence is RGHRGKRKSA. Over residues 664-713 the composition is skewed to polar residues; that stretch reads TLSTEAAQPCSTSQPPLLGDTNSLVNNSKQCNSSACSPKPDTNLQASGRQ. The interval 693–1104 is required for interaction with POLH and POLH DNA synthesis stimulation; it reads QCNSSACSPK…DGNIFIYRYF (412 aa). The interaction with RAD51 and BRCA2 stretch occupies residues 771-1104; sequence GNLQLVSELK…DGNIFIYRYF (334 aa). The tract at residues 771–1104 is interaction with RAD51, BRCA2 and POLH; it reads GNLQLVSELK…DGNIFIYRYF (334 aa). WD repeat units lie at residues 772 to 833, 835 to 879, 880 to 927, 928 to 970, 976 to 1027, 1033 to 1071, and 1073 to 1104; these read NLQL…WHFT, VPVL…QVLL, KSGD…LMPP, DETV…MHID, SVCH…LLCS, AGRFLEGDVKDHVAAAVLTSGTIAIWDLLLGHCTALLPP, and SDQSWSLVKWSGTDSHLLAGQKDGNIFIYRYF.

As to quaternary structure, homooligomer; dissociated upon DNA damage thus allowing association with BRCA1. Oligomerization is essential for its focal accumulation at DNA breaks. Part of a BRCA complex containing BRCA1, BRCA2 and PALB2. Interacts with BRCA1 and this interaction is essential for its function in HRR. Interacts with RAD51AP1 and MORF4L1/MRG15. Component of the homologous recombination repair (HR) complex composed of ERCC5/XPG, BRCA2, PALB2, DSS1 and RAD51. Within the complex, interacts with ERCC5/XPG and BRCA2. Interacts with BRCA2, RAD51C, RAD51 and XRCC3; the interactions are direct and it may serve as a scaffold for a HR complex containing PALB2, BRCA2, RAD51C, RAD51 and XRCC3. Interacts with POLH; the interaction is direct.

The protein localises to the nucleus. Functionally, plays a critical role in homologous recombination repair (HRR) through its ability to recruit BRCA2 and RAD51 to DNA breaks. Strongly stimulates the DNA strand-invasion activity of RAD51, stabilizes the nucleoprotein filament against a disruptive BRC3-BRC4 polypeptide and helps RAD51 to overcome the suppressive effect of replication protein A (RPA). Functionally cooperates with RAD51AP1 in promoting of D-loop formation by RAD51. Serves as the molecular scaffold in the formation of the BRCA1-PALB2-BRCA2 complex which is essential for homologous recombination. Via its WD repeats is proposed to scaffold a HR complex containing RAD51C and BRCA2 which is thought to play a role in HR-mediated DNA repair. Essential partner of BRCA2 that promotes the localization and stability of BRCA2. Also enables its recombinational repair and checkpoint functions of BRCA2. May act by promoting stable association of BRCA2 with nuclear structures, allowing BRCA2 to escape the effects of proteasome-mediated degradation. Binds DNA with high affinity for D loop, which comprises single-stranded, double-stranded and branched DNA structures. May play a role in the extension step after strand invasion at replication-dependent DNA double-strand breaks; together with BRCA2 is involved in both POLH localization at collapsed replication forks and DNA polymerization activity. This Mus musculus (Mouse) protein is Partner and localizer of BRCA2 (Palb2).